The sequence spans 56 residues: Protein p56 (56 aa).

It belongs to the phi29likevirus protein p56 family. Homodimer. Interacts with host UDG; this interaction inhibits the uracil-DNA glycosylase.

Functionally, inhibits the host uracil-DNA glycosylase (UDG), an enzyme which removes uracil residues from DNA by the base excision repair. Interacts with host uracil-DNA glycosylase and prevents the latter from binding to DNA. Since the viral DNA polymerase efficiently incorporates dUMP into DNA, the virus needs to prevent the deleterious effect caused by host UDG when it eliminates uracil residues present in the viral genome. The sequence is that of Protein p56 (1B) from Bacillus phage PZA (Bacteriophage PZA).